The sequence spans 528 residues: Putative pumilio homolog 10 (528 aa).

Residues 188 to 528 enclose the PUM-HD domain; that stretch reads EGSGASYPDE…KIFSKTILKK (341 aa). 8 Pumilio repeats span residues 213 to 248, 249 to 284, 285 to 323, 325 to 360, 361 to 396, 397 to 433, 434 to 465, and 466 to 503; these read EIYGSVNLMARDQIGCRALQKLVEEGTVLDSKVIFL, EIIDHVVELSMDPLGNYIVQKLLVVSDEEQRTMIVS, VLTSKPRELIKICLNTNGTRVIQKMIKTVKTKQQIALVK, ALEPGFLVLVNDSNGYHVLQSCLEFLVPNDNKFVVE, AATEYCAQLATHQYGCYVLQCSLINTVGLQHERLVA, EISRDSLRLSQDPFGNYVVQCLIDQQVSSVNLLLPFR, THCIELATQKFSSHVIEKCLRKYPESRAEIVR, and ELLSYPNFEQLLQDPYANYVIQTALSVTKGAVRARLVE.

It localises to the cytoplasm. Its function is as follows. Sequence-specific RNA-binding protein that regulates translation and mRNA stability by binding the 3'-UTR of target mRNAs. This is Putative pumilio homolog 10 (APUM10) from Arabidopsis thaliana (Mouse-ear cress).